The following is a 156-amino-acid chain: Small ribosomal subunit protein uS7 (156 aa).

This sequence belongs to the universal ribosomal protein uS7 family. In terms of assembly, part of the 30S ribosomal subunit. Contacts proteins S9 and S11.

In terms of biological role, one of the primary rRNA binding proteins, it binds directly to 16S rRNA where it nucleates assembly of the head domain of the 30S subunit. Is located at the subunit interface close to the decoding center, probably blocks exit of the E-site tRNA. The sequence is that of Small ribosomal subunit protein uS7 from Campylobacter fetus subsp. fetus (strain 82-40).